Consider the following 228-residue polypeptide: tRNA (guanine-N(1)-)-methyltransferase (228 aa).

Residues G111 and 130-135 each bind S-adenosyl-L-methionine; that span reads IGDFVL.

It belongs to the RNA methyltransferase TrmD family. In terms of assembly, homodimer.

It is found in the cytoplasm. It carries out the reaction guanosine(37) in tRNA + S-adenosyl-L-methionine = N(1)-methylguanosine(37) in tRNA + S-adenosyl-L-homocysteine + H(+). Specifically methylates guanosine-37 in various tRNAs. The protein is tRNA (guanine-N(1)-)-methyltransferase of Ureaplasma parvum serovar 3 (strain ATCC 27815 / 27 / NCTC 11736).